We begin with the raw amino-acid sequence, 525 residues long: Patatin-like protein 8 (525 aa).

Residues 1-50 form a disordered region; it reads MNRRYEKPPPLSVSSKGKKKHFVNHTAPNTPGNYERTQTSPTLSTARSHE. Residues 26–46 show a composition bias toward polar residues; that stretch reads TAPNTPGNYERTQTSPTLSTA. The PNPLA domain occupies 124–338; sequence LSIDGGGMRG…AMSNPTAAAI (215 aa). The GXGXXG motif lies at 128-133; sequence GGGMRG. S168 serves as the catalytic Nucleophile.

This sequence belongs to the patatin family. As to expression, specifically expressed in roots.

Functionally, possesses non-specific lipolytic acyl hydrolase (LAH) activity. Hydrolyzes phospholipids as well as galactolipids. May play a role in disease resistance. In Arabidopsis thaliana (Mouse-ear cress), this protein is Patatin-like protein 8 (PLP8).